A 619-amino-acid polypeptide reads, in one-letter code: Dihydroxy-acid dehydratase 1 (619 aa).

D81 serves as a coordination point for Mg(2+). A [2Fe-2S] cluster-binding site is contributed by C122. 2 residues coordinate Mg(2+): D123 and K124. The residue at position 124 (K124) is an N6-carboxylysine. C198 contributes to the [2Fe-2S] cluster binding site. E494 contributes to the Mg(2+) binding site. The active-site Proton acceptor is the S520.

It belongs to the IlvD/Edd family. In terms of assembly, homodimer. It depends on [2Fe-2S] cluster as a cofactor. The cofactor is Mg(2+).

The catalysed reaction is (2R)-2,3-dihydroxy-3-methylbutanoate = 3-methyl-2-oxobutanoate + H2O. The enzyme catalyses (2R,3R)-2,3-dihydroxy-3-methylpentanoate = (S)-3-methyl-2-oxopentanoate + H2O. It participates in amino-acid biosynthesis; L-isoleucine biosynthesis; L-isoleucine from 2-oxobutanoate: step 3/4. Its pathway is amino-acid biosynthesis; L-valine biosynthesis; L-valine from pyruvate: step 3/4. Its function is as follows. Functions in the biosynthesis of branched-chain amino acids. Catalyzes the dehydration of (2R,3R)-2,3-dihydroxy-3-methylpentanoate (2,3-dihydroxy-3-methylvalerate) into 2-oxo-3-methylpentanoate (2-oxo-3-methylvalerate) and of (2R)-2,3-dihydroxy-3-methylbutanoate (2,3-dihydroxyisovalerate) into 2-oxo-3-methylbutanoate (2-oxoisovalerate), the penultimate precursor to L-isoleucine and L-valine, respectively. The polypeptide is Dihydroxy-acid dehydratase 1 (Bordetella bronchiseptica (strain ATCC BAA-588 / NCTC 13252 / RB50) (Alcaligenes bronchisepticus)).